The primary structure comprises 239 residues: Sensory rhodopsin-2 (239 aa).

Residues 1-3 (MVG) lie on the Extracellular side of the membrane. A helical membrane pass occupies residues 4–25 (LTTLFWLGAIGMLVGTLAFAWA). Over 26–33 (GRDAGSGE) the chain is Cytoplasmic. Residues 34 to 55 (RRYYVTLVGISGIAAVAYVVMA) traverse the membrane as a helical segment. Over 56–69 (LGVGWVPVAERTVF) the chain is Extracellular. The chain crosses the membrane as a helical span at residues 70-91 (APRYIDWILTTPLIVYFLGLLA). At 92 to 94 (GLD) the chain is on the cytoplasmic side. The helical transmembrane segment at 95-117 (SREFGIVITLNTVVMLAGFAGAM) threads the bilayer. The Extracellular segment spans residues 118-121 (VPGI). Residues 122 to 149 (ERYALFGMGAVAFLGLVYYLVGPMTESA) form a helical membrane-spanning segment. Topologically, residues 150–153 (SQRS) are cytoplasmic. The chain crosses the membrane as a helical span at residues 154-181 (SGIKSLYVRLRNLTVILWAIYPFIWLLG). The Extracellular portion of the chain corresponds to 182 to 189 (PPGVALLT). The chain crosses the membrane as a helical span at residues 190–222 (PTVDVALIVYLDLVTKVGFGFIALDAAATLRAE). An N6-(retinylidene)lysine modification is found at Lys-205. Over 223 to 239 (HGESLAGVDTDAPAVAD) the chain is Cytoplasmic.

This sequence belongs to the archaeal/bacterial/fungal opsin family. In terms of assembly, homodimer. Interacts with HTR-II.

It is found in the cell membrane. Its function is as follows. Photophobic photoreceptor responsible for the negative phototaxis. Activates the sensory rhodopsin II transducer (HTR-II) in response to blue light. This Natronomonas pharaonis (Natronobacterium pharaonis) protein is Sensory rhodopsin-2 (sop2).